A 1162-amino-acid chain; its full sequence is MSSILGKRKNEEVVSFSPLKRISVEKSLLDSTAYNNSLDWLRSKNFKVSCLLKHFNSKIINDHPLSGSCYTDIGYALINSRKACFILSYRQSLGTAEPPTITFPLPEEDSNGFSGQNALTAFVPSDASDKEPGLLIVMPISGRIAYWTSIGNALAQSYICPQGMESLIKLLPKEKCEHLCCSNPMKFIISTNFGRLFSVQLRDPAGQPDVSVQLFASDISTFSTILQKMKIFNYPSIHIIALKSPPLFSPYQHLLYVAEASGLLEIYDLKLENKLVSGMNLSPIFKQVLREGCPDASGLEVLDLTICPTNGNLVSFLVCWKNSINYRYMIISLDFSDISSPSVMNIHPLYSFSSKSLESSKLHYSSSGNSLFVVLTDAVIIVHVQEDDKDIVSRTSWEEVIRMNTNVSGGIFMSTCYKYVLGKYSIPTESCFIATPYSGIAEIEVHSLEHPANNESLVKSKLEEAVFYSFLPGNPIDFSCNYLRSIKKPELERIIVDLGMDILNSRSTHLPPLFASLMQHLSCRLNSLNNLVRYIRSMSLDVDRQVLYKLRVMGEKCNSVRYLWNTIDTEFSTVSHSLIFQRIIYRLTQSASSDNALREWFLHNIESIDQLIAQAHEFCIDSGSRVQELPLEVLDVIMEANEVILAIQSSALAYRRESQKIYKLSIDTFGEEVPWTSTPETLVLLCRQFELTRSALVQSHQGTSDVENTFKIKDKGVLRNVVSNLEVQLVALTEVCFDAYSERIRWIEQRCGKDASEIQDVKEAFAVNRRFWVQTLSDIGKGSSAIRIAEKYSDYRSLVELCYQLYEDNELTDALNNYLDLFGIKFAFILYDYFVENGMALELLNSDRFNKSYLKQFFKSRDYNQISWMHDMRLGDYDAASHRLLQLATKQEKLVDKKESELSLSKLFLYAVPSNSGNIRDLVLVEQKLEQLHIQKMVSKSVMPVVERLRSQGKKYQLVEAVVDDLIGAKVAPVIARQVMQRVVKKFIAGQVVEATELLEYLSFSLYRREDLVEGEVTDYYLALRLLLTTRLTDDAKRFYENTIWRRAVLHDNWIQVLDTQGKNDAIIETQFRMSALYRTLEAVTINGLFHEGLIRPGSLSSCKFEGYDPQNLISIYPPARFGDVTEVTKVLNRESVKLDHYLTKTNLNTCYISMCLSCDTI.

It belongs to the nucleoporin Nup133 family. As to quaternary structure, component of the npc107-120 complex which consists of nup85, nup107, nup120, nup131, nup132 and seh1. Interacts with nup107.

The protein localises to the nucleus envelope. Functionally, functions as a component of the nuclear pore complex (NPC). NPC components, collectively referred to as nucleoporins (NUPs), can play the role of both NPC structural components and of docking or interaction partners for transiently associated nuclear transport factors. Active directional transport is assured by both, a Phe-Gly (FG) repeat affinity gradient for these transport factors across the NPC and a transport cofactor concentration gradient across the nuclear envelope. In Schizosaccharomyces pombe (strain 972 / ATCC 24843) (Fission yeast), this protein is Nucleoporin nup132 (nup132).